The chain runs to 449 residues: Cyclin-B1-5 (449 aa).

Disordered regions lie at residues 1 to 37 and 98 to 147; these read MATRHQRAAAAPQPANRGAAVAAGKQKAAATAAAGRP and PARK…GGSA. 2 stretches are compositionally biased toward low complexity: residues 8–37 and 136–147; these read AAAAPQPANRGAAVAAGKQKAAATAAAGRP and SEGAGSSSGGSA.

This sequence belongs to the cyclin family. Cyclin AB subfamily.

This is Cyclin-B1-5 (CYCB1-5) from Oryza sativa subsp. japonica (Rice).